A 647-amino-acid chain; its full sequence is Macrolide export ATP-binding/permease protein MacB 2 (647 aa).

An ABC transporter domain is found at 6–244; sequence IQLKGIERRY…VTPTAAPAGK (239 aa). 42–49 serves as a coordination point for ATP; sequence GASGSGKS. The disordered stretch occupies residues 223–247; it reads QEDSGRKPAAVPVTPTAAPAGKEGV. Residues 230–242 show a composition bias toward low complexity; it reads PAAVPVTPTAAPA. Transmembrane regions (helical) follow at residues 273-293, 527-547, 581-601, and 610-630; these read FLTMLGIIIGIAAVVSVVALG, IAVISLIVGGVGVMNIMLVSV, LGGMLGVGVSLFIGLLFSLFV, and LFSILMAFGCSSLIGILFGYL.

Belongs to the ABC transporter superfamily. Macrolide exporter (TC 3.A.1.122) family. As to quaternary structure, homodimer. Part of the tripartite efflux system MacAB-TolC, which is composed of an inner membrane transporter, MacB, a periplasmic membrane fusion protein, MacA, and an outer membrane component, TolC. The complex forms a large protein conduit and can translocate molecules across both the inner and outer membranes. Interacts with MacA.

The protein resides in the cell inner membrane. In terms of biological role, part of the tripartite efflux system MacAB-TolC. MacB is a non-canonical ABC transporter that contains transmembrane domains (TMD), which form a pore in the inner membrane, and an ATP-binding domain (NBD), which is responsible for energy generation. Confers resistance against macrolides. The protein is Macrolide export ATP-binding/permease protein MacB 2 of Aeromonas hydrophila subsp. hydrophila (strain ATCC 7966 / DSM 30187 / BCRC 13018 / CCUG 14551 / JCM 1027 / KCTC 2358 / NCIMB 9240 / NCTC 8049).